A 683-amino-acid chain; its full sequence is Acetyl-coenzyme A synthetase 2 (683 aa).

CoA contacts are provided by residues 206 to 209 and T325; that span reads RGGK. ATP contacts are provided by residues 401–403 and 425–430; these read GEP and DTMWQT. 425 to 430 is an AMP binding site; the sequence is DTMWQT. K506 is covalently cross-linked (Glycyl lysine isopeptide (Lys-Gly) (interchain with G-Cter in ubiquitin)). ATP is bound by residues D516 and R531. The AMP site is built by D516 and R531. S539 contacts CoA. Residue R542 coordinates ATP. A CoA-binding site is contributed by R612. S679 carries the phosphoserine modification.

It belongs to the ATP-dependent AMP-binding enzyme family.

Its subcellular location is the cytoplasm. It is found in the nucleus. It catalyses the reaction acetate + ATP + CoA = acetyl-CoA + AMP + diphosphate. It participates in carbohydrate metabolism; pyruvate metabolism. In terms of biological role, catalyzes the production of acetyl-CoA. Provides the acetyl-CoA source for histone acetylation in the nucleus. 'Anaerobic' isozyme of acetyl-coenzyme A synthetase, which is required for growth on fermentable carbon sources such as glucose. May be involved in the PDH (pyruvate dehydrogenase complex) bypass. This is Acetyl-coenzyme A synthetase 2 from Saccharomyces cerevisiae (strain ATCC 204508 / S288c) (Baker's yeast).